The chain runs to 106 residues: ATP-dependent Clp protease adapter protein ClpS (106 aa).

Belongs to the ClpS family. Binds to the N-terminal domain of the chaperone ClpA.

In terms of biological role, involved in the modulation of the specificity of the ClpAP-mediated ATP-dependent protein degradation. The sequence is that of ATP-dependent Clp protease adapter protein ClpS from Salmonella gallinarum (strain 287/91 / NCTC 13346).